Reading from the N-terminus, the 271-residue chain is GPN-loop GTPase 3 (271 aa).

13 to 18 contacts GTP; the sequence is GAGKST. The Gly-Pro-Asn (GPN)-loop; involved in dimer interface motif lies at 70–72; it reads GPN. 173 to 176 lines the GTP pocket; sequence SKLD.

This sequence belongs to the GPN-loop GTPase family. As to quaternary structure, heterodimers with GPN1 or GPN2. Binds to RNA polymerase II (RNAPII).

Small GTPase required for proper nuclear import of RNA polymerase II and III (RNAPII and RNAPIII). May act at an RNAP assembly step prior to nuclear import. This chain is GPN-loop GTPase 3, found in Candida glabrata (strain ATCC 2001 / BCRC 20586 / JCM 3761 / NBRC 0622 / NRRL Y-65 / CBS 138) (Yeast).